The following is a 118-amino-acid chain: Large ribosomal subunit protein bL20 (118 aa).

This sequence belongs to the bacterial ribosomal protein bL20 family.

Binds directly to 23S ribosomal RNA and is necessary for the in vitro assembly process of the 50S ribosomal subunit. It is not involved in the protein synthesizing functions of that subunit. The chain is Large ribosomal subunit protein bL20 from Francisella tularensis subsp. tularensis (strain WY96-3418).